Reading from the N-terminus, the 539-residue chain is Alpha-aminoadipic semialdehyde dehydrogenase (539 aa).

The transit peptide at 1–26 directs the protein to the mitochondrion; sequence MWRVPRRLCVQSVKTSKLSGPWSRPA. Residues Lys86, Lys94, and Lys97 each carry the N6-acetyllysine; alternate modification. Lys86, Lys94, and Lys97 each carry N6-succinyllysine; alternate. NAD(+)-binding positions include 192–194, Lys218, 258–259, 274–275, 274–279, and 296–297; these read TAF, GT, GS, GSTQVG, and EL. Catalysis depends on Glu296, which acts as the Proton acceptor. Cys330 serves as the catalytic Nucleophile. Thr331 is a (S)-2-amino-6-oxohexanoate binding site. Glu427 is a binding site for NAD(+). Lys462 bears the N6-acetyllysine mark. Residues Gly489 and Ala490 each coordinate (S)-2-amino-6-oxohexanoate. The residue at position 500 (Lys500) is an N6-acetyllysine. At Lys537 the chain carries N6-succinyllysine.

It belongs to the aldehyde dehydrogenase family. In terms of assembly, homotetramer. In terms of tissue distribution, present in liver, kidney, brain and pancreas, and at lower levels in jejunum, duodenum, stomach and testes (at protein level).

The protein localises to the cytoplasm. The protein resides in the cytosol. It is found in the nucleus. It localises to the mitochondrion. It carries out the reaction nonanal + NAD(+) + H2O = nonanoate + NADH + 2 H(+). It catalyses the reaction (S)-2-amino-6-oxohexanoate + NAD(+) + H2O = L-2-aminoadipate + NADH + 2 H(+). The catalysed reaction is betaine aldehyde + NAD(+) + H2O = glycine betaine + NADH + 2 H(+). The enzyme catalyses an aldehyde + NAD(+) + H2O = a carboxylate + NADH + 2 H(+). It carries out the reaction hexanal + NAD(+) + H2O = hexanoate + NADH + 2 H(+). It catalyses the reaction octanal + NAD(+) + H2O = octanoate + NADH + 2 H(+). The catalysed reaction is (E)-non-2-enal + NAD(+) + H2O = (E)-non-2-enoate + NADH + 2 H(+). The enzyme catalyses (E)-4-hydroxynon-2-enal + NAD(+) + H2O = (E)-4-hydroxynon-2-enoate + NADH + 2 H(+). The protein operates within amine and polyamine biosynthesis; betaine biosynthesis via choline pathway; betaine from betaine aldehyde: step 1/1. In terms of biological role, multifunctional enzyme mediating important protective effects. Metabolizes betaine aldehyde to betaine, an important cellular osmolyte and methyl donor. Protects cells from oxidative stress by metabolizing a number of lipid peroxidation-derived aldehydes. Involved in lysine catabolism. In Mus musculus (Mouse), this protein is Alpha-aminoadipic semialdehyde dehydrogenase.